The primary structure comprises 30 residues: Photosystem II reaction center protein Psb30 (30 aa).

Topologically, residues 1 to 6 are lumenal; sequence EVIAQL. Residues 7–21 form a helical membrane-spanning segment; that stretch reads TMIAMIGIAGPMIIF. The Cytoplasmic portion of the chain corresponds to 22–30; it reads LLAVRRGNL.

It belongs to the Psb30/Ycf12 family. PSII is composed of 1 copy each of membrane proteins PsbA, PsbB, PsbC, PsbD, PsbE, PsbF, PsbH, PsbI, PsbJ, PsbK, PsbL, PsbM, PsbT, PsbX, PsbY, PsbZ, Psb30/Ycf12, peripheral proteins PsbO, CyanoQ (PsbQ), PsbU, PsbV and a large number of cofactors. It forms dimeric complexes. PSII binds multiple chlorophylls, carotenoids and specific lipids. serves as cofactor.

It is found in the cellular thylakoid membrane. In terms of biological role, a core subunit of photosystem II (PSII), probably helps stabilize the reaction center. PSII is a light-driven water plastoquinone oxidoreductase, using light energy to abstract electrons from H(2)O, generating a proton gradient subsequently used for ATP formation. The chain is Photosystem II reaction center protein Psb30 from Thermostichus vulcanus (Synechococcus vulcanus).